Reading from the N-terminus, the 459-residue chain is uncharacterized protein (459 aa).

One can recognise a TRAM domain in the interval 7–65 (PVNKNEIYTLTFEDLTHEGNGVAKIEGYPLFVPEVLPDEQAKVKVVKVNKNFGFGKLLE). Positions 78, 82, 85, and 164 each coordinate [4Fe-4S] cluster. S-adenosyl-L-methionine contacts are provided by Q288, Y317, E338, and D386. Catalysis depends on C413, which acts as the Nucleophile.

The protein belongs to the class I-like SAM-binding methyltransferase superfamily. RNA M5U methyltransferase family.

This is an uncharacterized protein from Oceanobacillus iheyensis (strain DSM 14371 / CIP 107618 / JCM 11309 / KCTC 3954 / HTE831).